The sequence spans 758 residues: 5-methyltetrahydropteroyltriglutamate--homocysteine methyltransferase (758 aa).

5-methyltetrahydropteroyltri-L-glutamate is bound by residues 17–20 and K117; that span reads RELK. L-homocysteine contacts are provided by residues 434-436 and E487; that span reads IGS. Residues 434-436 and E487 contribute to the L-methionine site; that span reads IGS. Residues 518–519 and W564 each bind 5-methyltetrahydropteroyltri-L-glutamate; that span reads RC. D602 is a binding site for L-homocysteine. D602 is a binding site for L-methionine. Residue E608 coordinates 5-methyltetrahydropteroyltri-L-glutamate. Zn(2+)-binding residues include H644, C646, and E668. H697 (proton donor) is an active-site residue. C729 is a binding site for Zn(2+).

Belongs to the vitamin-B12 independent methionine synthase family. Zn(2+) serves as cofactor.

The enzyme catalyses 5-methyltetrahydropteroyltri-L-glutamate + L-homocysteine = tetrahydropteroyltri-L-glutamate + L-methionine. Its pathway is amino-acid biosynthesis; L-methionine biosynthesis via de novo pathway; L-methionine from L-homocysteine (MetE route): step 1/1. Catalyzes the transfer of a methyl group from 5-methyltetrahydrofolate to homocysteine resulting in methionine formation. The chain is 5-methyltetrahydropteroyltriglutamate--homocysteine methyltransferase from Yersinia pseudotuberculosis serotype I (strain IP32953).